A 289-amino-acid chain; its full sequence is Carbonyl reductase [NADPH] 1 (289 aa).

Serine 2 is subject to N-acetylserine. Residue serine 2 is modified to Phosphoserine. NADP(+) is bound by residues 10-34 (VTGANKGIGFAIVRDLCRQFAGDVV), 63-64 (DI), and asparagine 90. Residues 95–97 (FQL) and glutamine 106 each bind glutathione. Serine 140 is a binding site for substrate. 193–194 (TY) lines the glutathione pocket. Tyrosine 194 (proton acceptor) is an active-site residue. NADP(+)-binding positions include 194-198 (YGVTK) and 231-233 (VRT). Lysine 239 carries the post-translational modification N6-1-carboxyethyl lysine.

It belongs to the short-chain dehydrogenases/reductases (SDR) family. Monomer. In terms of tissue distribution, expressed in kidney (at protein level).

It is found in the cytoplasm. The catalysed reaction is a secondary alcohol + NADP(+) = a ketone + NADPH + H(+). The enzyme catalyses prostaglandin E1 + NADP(+) = 15-oxoprostaglandin E1 + NADPH + H(+). It catalyses the reaction prostaglandin F2alpha + NADP(+) = prostaglandin E2 + NADPH + H(+). It carries out the reaction prostaglandin D2 + NADP(+) = 15-oxoprostaglandin D2 + NADPH + H(+). The catalysed reaction is prostaglandin E2 + NADP(+) = 15-oxoprostaglandin E2 + NADPH + H(+). The enzyme catalyses prostaglandin F2alpha + NADP(+) = 15-oxoprostaglandin F2alpha + NADPH + H(+). It catalyses the reaction menadione + NADPH + H(+) = menadiol + NADP(+). It carries out the reaction daunorubicin + NADPH + H(+) = 13-dihydrodaunorubicin + NADP(+). The catalysed reaction is S-nitrosoglutathione + NADPH + H(+) = S-(hydroxysulfenamide)glutathione + NADP(+). The enzyme catalyses a primary alcohol + NADP(+) = an aldehyde + NADPH + H(+). It catalyses the reaction cortisol + NADPH + H(+) = 20beta-dihydrocortisol + NADP(+). It carries out the reaction corticosterone + NADPH + H(+) = 20beta-dihydrocorticosterone + NADP(+). In terms of biological role, NADPH-dependent reductase with broad substrate specificity. Catalyzes the reduction of a wide variety of carbonyl compounds including quinones, prostaglandins, menadione, plus various xenobiotics. Catalyzes the reduction of the antitumor anthracyclines doxorubicin and daunorubicin to the cardiotoxic compounds doxorubicinol and daunorubicinol. Can convert prostaglandin E2 to prostaglandin F2-alpha. Can bind glutathione, which explains its higher affinity for glutathione-conjugated substrates. Catalyzes the reduction of S-nitrosoglutathione. In addition, participates in the glucocorticoid metabolism by catalyzing the NADPH-dependent cortisol/corticosterone into 20beta-dihydrocortisol (20b-DHF) or 20beta-corticosterone (20b-DHB), which are weak agonists of NR3C1 and NR3C2 in adipose tissue. This is Carbonyl reductase [NADPH] 1 from Sus scrofa (Pig).